Reading from the N-terminus, the 399-residue chain is Elongation factor Tu (399 aa).

Positions 10–204 constitute a tr-type G domain; the sequence is KPHVNIGTIG…AVDASIPEPE (195 aa). Residues 19 to 26 form a G1 region; the sequence is GHVDHGKT. Residue 19-26 coordinates GTP; that stretch reads GHVDHGKT. Threonine 26 serves as a coordination point for Mg(2+). Positions 60 to 64 are G2; the sequence is GITIN. Residues 81–84 are G3; that stretch reads DCPG. GTP is bound by residues 81-85 and 136-139; these read DCPGH and NKCD. A G4 region spans residues 136-139; that stretch reads NKCD. Residues 174–176 are G5; it reads SGL.

Belongs to the TRAFAC class translation factor GTPase superfamily. Classic translation factor GTPase family. EF-Tu/EF-1A subfamily. As to quaternary structure, monomer.

It is found in the cytoplasm. It carries out the reaction GTP + H2O = GDP + phosphate + H(+). Its function is as follows. GTP hydrolase that promotes the GTP-dependent binding of aminoacyl-tRNA to the A-site of ribosomes during protein biosynthesis. This chain is Elongation factor Tu, found in Prochlorococcus marinus (strain MIT 9215).